The sequence spans 582 residues: Insulin-like growth factor 2 mRNA-binding protein 3 (582 aa).

RRM domains follow at residues 2–75 (NKLY…HSVP) and 81–156 (CKLQ…YIPD). A disordered region spans residues 164–190 (PAVGGRRGFNPRGPPRQGSPSLGARPK). Serine 182 carries the post-translational modification Phosphoserine. 4 KH domains span residues 194–259 (DVPL…CRNI), 275–342 (EIPL…EEEI), 408–473 (SETV…QGRI), and 490–556 (KLEA…QRKI). Residues 562 to 582 (QVRRQQQPKPSAAGPPVARRK) form a disordered region.

It belongs to the RRM IMP/VICKZ family. In terms of assembly, homodimer and multimer.

The protein localises to the cytoplasm. The protein resides in the nucleus. It localises to the P-body. It is found in the stress granule. Its function is as follows. RNA-binding factor that may recruit target transcripts to cytoplasmic protein-RNA complexes (mRNPs). This transcript 'caging' into mRNPs allows mRNA transport and transient storage. It also modulates the rate and location at which target transcripts encounter the translational apparatus and shields them from endonuclease attacks or microRNA-mediated degradation. Preferentially binds to N6-methyladenosine (m6A)-containing mRNAs and increases their stability. Involved in neuronal crest migration. The sequence is that of Insulin-like growth factor 2 mRNA-binding protein 3 (igf2bp3) from Danio rerio (Zebrafish).